An 803-amino-acid polypeptide reads, in one-letter code: Phenylalanine--tRNA ligase beta subunit (803 aa).

Positions 39–152 (TPGFQKVVAG…PDASPGADAA (114 aa)) constitute a tRNA-binding domain. The region spanning 406-480 (RQPVTIELRP…RLYGYNRIPV (75 aa)) is the B5 domain. Mg(2+) contacts are provided by aspartate 458, aspartate 464, glutamate 467, and glutamate 468. Positions 709–802 (PRFPAVERDL…LEERLGASLR (94 aa)) constitute an FDX-ACB domain.

Belongs to the phenylalanyl-tRNA synthetase beta subunit family. Type 1 subfamily. In terms of assembly, tetramer of two alpha and two beta subunits. Mg(2+) serves as cofactor.

Its subcellular location is the cytoplasm. The enzyme catalyses tRNA(Phe) + L-phenylalanine + ATP = L-phenylalanyl-tRNA(Phe) + AMP + diphosphate + H(+). The protein is Phenylalanine--tRNA ligase beta subunit of Moorella thermoacetica (strain ATCC 39073 / JCM 9320).